Reading from the N-terminus, the 564-residue chain is Dihydroxy-acid dehydratase (564 aa).

Mg(2+) is bound at residue aspartate 80. Cysteine 121 contacts [2Fe-2S] cluster. Positions 122 and 123 each coordinate Mg(2+). Lysine 123 bears the N6-carboxylysine mark. Residue cysteine 194 coordinates [2Fe-2S] cluster. Glutamate 447 lines the Mg(2+) pocket. Serine 473 serves as the catalytic Proton acceptor.

This sequence belongs to the IlvD/Edd family. As to quaternary structure, homodimer. The cofactor is [2Fe-2S] cluster. Requires Mg(2+) as cofactor.

It catalyses the reaction (2R)-2,3-dihydroxy-3-methylbutanoate = 3-methyl-2-oxobutanoate + H2O. The enzyme catalyses (2R,3R)-2,3-dihydroxy-3-methylpentanoate = (S)-3-methyl-2-oxopentanoate + H2O. Its pathway is amino-acid biosynthesis; L-isoleucine biosynthesis; L-isoleucine from 2-oxobutanoate: step 3/4. It functions in the pathway amino-acid biosynthesis; L-valine biosynthesis; L-valine from pyruvate: step 3/4. In terms of biological role, functions in the biosynthesis of branched-chain amino acids. Catalyzes the dehydration of (2R,3R)-2,3-dihydroxy-3-methylpentanoate (2,3-dihydroxy-3-methylvalerate) into 2-oxo-3-methylpentanoate (2-oxo-3-methylvalerate) and of (2R)-2,3-dihydroxy-3-methylbutanoate (2,3-dihydroxyisovalerate) into 2-oxo-3-methylbutanoate (2-oxoisovalerate), the penultimate precursor to L-isoleucine and L-valine, respectively. In Listeria innocua serovar 6a (strain ATCC BAA-680 / CLIP 11262), this protein is Dihydroxy-acid dehydratase.